A 688-amino-acid polypeptide reads, in one-letter code: Glycine--tRNA ligase beta subunit (688 aa).

Belongs to the class-II aminoacyl-tRNA synthetase family. Tetramer of two alpha and two beta subunits.

It is found in the cytoplasm. The enzyme catalyses tRNA(Gly) + glycine + ATP = glycyl-tRNA(Gly) + AMP + diphosphate. This is Glycine--tRNA ligase beta subunit from Actinobacillus pleuropneumoniae serotype 7 (strain AP76).